A 328-amino-acid chain; its full sequence is Gonadotropin-releasing hormone receptor (328 aa).

Topologically, residues 1 to 38 (MANGDSPDQNENHCSAINSSILLTPGSLPTLTLSGKIR) are extracellular. Asn18 carries N-linked (GlcNAc...) asparagine glycosylation. The chain crosses the membrane as a helical span at residues 39-58 (VTVTFFLFLLSTIFNTSFLL). The Cytoplasmic segment spans residues 59–77 (KLQNWTQRKEKRKKLSKMK). Residues 78 to 97 (VLLKHLTLANLLETLIVMPL) traverse the membrane as a helical segment. Residues 98-115 (DGMWNITVQWYAGELLCK) are Extracellular-facing. Asn102 is a glycosylation site (N-linked (GlcNAc...) asparagine). Cys114 and Cys196 are joined by a disulfide. Residues 116-137 (VLSYLKLFSMYAPAFMMVVISL) traverse the membrane as a helical segment. Topologically, residues 138-164 (DRSLAITRPLAVKSNSKLGQFMIGLAW) are cytoplasmic. The chain crosses the membrane as a helical span at residues 165–184 (LLSSIFAGPQLYIFGMIHLA). Residues 185–212 (DDSGQTEGFSQCVTHCSFPQWWHQAFYN) are Extracellular-facing. A helical membrane pass occupies residues 213 to 232 (FFTFSCLFIIPLLIMLICNA). Residues 233-281 (KIIFTLTRVLHQDPHKLQLNQSKNNIPQARLRTLKMTVAFATSFTVCWT) lie on the Cytoplasmic side of the membrane. The chain crosses the membrane as a helical span at residues 282–300 (PYYVLGIWYWFDPDMVNRV). Residues 301-306 (SDPVNH) lie on the Extracellular side of the membrane. The helical transmembrane segment at 307-326 (FFFLFAFLNPCFDPLIYGYF) threads the bilayer. At 327-328 (SL) the chain is on the cytoplasmic side.

Belongs to the G-protein coupled receptor 1 family.

It localises to the cell membrane. Functionally, receptor for gonadotropin releasing hormone (GnRH) that mediates the action of GnRH to stimulate the secretion of the gonadotropic hormones luteinizing hormone (LH) and follicle-stimulating hormone (FSH). This receptor mediates its action by association with G-proteins that activate a phosphatidylinositol-calcium second messenger system. The polypeptide is Gonadotropin-releasing hormone receptor (GNRHR) (Ovis aries (Sheep)).